The chain runs to 68 residues: MMSKLGVLLTICMLLFPLTALPLDGDQPADRPAERMQDDFISEQHPLFNPIKRCCDWPCTIGCVPCCK.

Residues 1-20 (MMSKLGVLLTICMLLFPLTA) form the signal peptide. Residues 21–51 (LPLDGDQPADRPAERMQDDFISEQHPLFNPI) constitute a propeptide that is removed on maturation. 3 disulfides stabilise this stretch: C54-C67, C55-C63, and C59-C66. P65 is subject to 4-hydroxyproline.

This sequence belongs to the conotoxin M superfamily. In terms of tissue distribution, expressed by the venom duct.

The protein resides in the secreted. The protein is Conotoxin ArMMSK-01 of Conus arenatus (Sand-dusted cone).